A 135-amino-acid polypeptide reads, in one-letter code: QFGNYYQPQPTYSPPARQQVPILQYSNEVNPDGSYAYSYQTGNGIAAQEQGYLKNPGQRDLEAENVQGTFSYTAPDGTPISLRYVADENGFRAEGAHLPTPPPIPEAIARSLEVIARTPQQPFQPQPQYNPFRRF.

Position 1 is a pyrrolidone carboxylic acid (Gln1). O-linked (HexNAc...) threonine glycans are attached at residues Thr11 and Thr100. Residues 32–102 (DGSYAYSYQT…AEGAHLPTPP (71 aa)) enclose the Chitin-binding type R&amp;R domain.

Its function is as follows. Component of the abdominal endocuticle. The polypeptide is Endocuticle structural glycoprotein SgAbd-2 (Schistocerca gregaria (Desert locust)).